The chain runs to 339 residues: Putative adenosine/adenine deaminase (339 aa).

Positions 16, 18, and 200 each coordinate Zn(2+). His-18 contributes to the substrate binding site. The Proton donor role is filled by Glu-203. Position 281 (Asp-281) interacts with Zn(2+). Substrate is bound at residue Asp-282.

Belongs to the metallo-dependent hydrolases superfamily. Adenosine and AMP deaminases family. Requires Zn(2+) as cofactor.

Its function is as follows. Putative nucleoside deaminase. May catalyze the hydrolytic deamination of adenosine or some similar substrate and play a role in purine metabolism. In Streptomyces virginiae (Streptomyces cinnamonensis), this protein is Putative adenosine/adenine deaminase.